Here is a 503-residue protein sequence, read N- to C-terminus: Transcriptional regulator LovE (503 aa).

The segment covering 1 to 14 (MAADQGTFTTSVTL) has biased composition (polar residues). The tract at residues 1-21 (MAADQGTFTTSVTLSPVEGSR) is disordered. The zn(2)-C6 fungal-type DNA-binding region spans 35 to 67 (CDRCHAQKIKCTGNKEVTARAPCQRCQQAGLRC). Disordered regions lie at residues 89–124 (ADPD…RQFL) and 331–362 (SHMN…DTIP). Residues 339–349 (SRSESPSRDDT) show a composition bias toward basic and acidic residues. A compositionally biased stretch (polar residues) spans 350–359 (SSTSGHSSVD).

It is found in the nucleus. In terms of biological role, transcription factor that regulates the expression of the he gene cluster that mediates the biosynthesis of lovastatin (also known as mevinolin, mevacor or monacolin K), a hypolipidemic inhibitor of (3S)-hydroxymethylglutaryl-coenzyme A (HMG-CoA) reductase (HMGR). In Aspergillus terreus (strain NIH 2624 / FGSC A1156), this protein is Transcriptional regulator LovE.